We begin with the raw amino-acid sequence, 612 residues long: Actin-binding LIM protein 2 (612 aa).

LIM zinc-binding domains follow at residues 22–81 (ILCN…LYGT), 81–141 (TRCF…TLVG), 151–210 (RSCG…KFGI), and 210–270 (IRCD…ARTE). 8 residues coordinate Zn(2+): cysteine 83, cysteine 86, histidine 103, cysteine 106, cysteine 109, cysteine 112, cysteine 131, and cysteine 134. Residues cysteine 212, cysteine 215, histidine 232, cysteine 235, cysteine 238, cysteine 241, histidine 260, and cysteine 263 each contribute to the Zn(2+) site. Residues 269–278 (TEDKSKETRT) show a composition bias toward basic and acidic residues. Disordered stretches follow at residues 269–295 (TEDKSKETRTSSESIVSVPASSTSGSP) and 341–433 (AVGD…DNIY). 2 stretches are compositionally biased toward low complexity: residues 279-295 (SSESIVSVPASSTSGSP) and 364-373 (SSPSSAGSVS). Residues serine 282, serine 294, serine 365, and serine 368 each carry the phosphoserine modification. Over residues 394 to 416 (SGRSTPSLSVHSDSRPPSSTYQQ) the composition is skewed to polar residues. The residue at position 453 (serine 453) is a Phosphoserine. The tract at residues 471–520 (ADTRTNSPDLDSQSLSLSSGADQEPLQRMPGDSLYSRFPYSKPDTLPGPR) is disordered. Threonine 473 carries the post-translational modification Phosphothreonine. Residues serine 477 and serine 579 each carry the phosphoserine modification. Low complexity predominate over residues 477–489 (SPDLDSQSLSLSS). Residues 544-612 (TREYKIYPYD…NDLKKKALLF (69 aa)) enclose the HP domain.

As to quaternary structure, interacts with F-actin and ABRA.

The protein localises to the cytoplasm. In terms of biological role, may act as scaffold protein. May stimulate ABRA activity and ABRA-dependent SRF transcriptional activity. The sequence is that of Actin-binding LIM protein 2 (Ablim2) from Rattus norvegicus (Rat).